Here is a 623-residue protein sequence, read N- to C-terminus: Kelch repeat and BTB domain-containing protein 2 (623 aa).

The BTB domain occupies 31-98 (TDIVLIVEGT…AYTGNLAMND (68 aa)). One can recognise a BACK domain in the interval 133 to 229 (CVRLLSFADL…IRIDALSEVT (97 aa)). Ser300 bears the Phosphoserine mark. 5 Kelch repeats span residues 317-380 (DIYI…CCEG), 381-429 (HIYA…VVHD), 431-469 (IYVMTLNLMYCYFPRSDSWVEMAMRQTSRSFASAAAFGD), 470-529 (KIFY…RAVV), and 535-581 (CVFM…DFRC).

As to quaternary structure, component of the BCR(KBTBD2) E3 ubiquitin ligase complex, at least composed of CUL3, KBTBD2 and RBX1. Interacts (via the BTB domain) with CUL3.

Its pathway is protein modification; protein ubiquitination. Substrate-specific adapter of a BCR (BTB-CUL3-RBX1) E3 ubiquitin ligase complex that acts as a regulator of the insulin signaling pathway, modulating insulin sensitivity by limiting PIK3R1/p85alpha abundance in adipocytes. Targets PIK3R1, the regulatory subunit of phosphatidylinositol 3-kinase (PI3K), for 'Lys-48'-linked polyubiquitination and proteasome-mediated degradation. The polypeptide is Kelch repeat and BTB domain-containing protein 2 (KBTBD2) (Pongo abelii (Sumatran orangutan)).